Here is a 144-residue protein sequence, read N- to C-terminus: Large ribosomal subunit protein uL15 (144 aa).

Positions 1–53 (MRLNTLSPAEGAKHSAKRLGRGIGSGLGKTGGRGHKGQKSRTGGGVRRGFEGG) are disordered. The span at 21-31 (RGIGSGLGKTG) shows a compositional bias: gly residues.

The protein belongs to the universal ribosomal protein uL15 family. Part of the 50S ribosomal subunit.

Functionally, binds to the 23S rRNA. In Pasteurella multocida (strain Pm70), this protein is Large ribosomal subunit protein uL15.